A 172-amino-acid chain; its full sequence is S-ribosylhomocysteine lyase (172 aa).

Residues histidine 54, histidine 58, and cysteine 128 each coordinate Fe cation.

This sequence belongs to the LuxS family. In terms of assembly, homodimer. Fe cation serves as cofactor.

The catalysed reaction is S-(5-deoxy-D-ribos-5-yl)-L-homocysteine = (S)-4,5-dihydroxypentane-2,3-dione + L-homocysteine. Its function is as follows. Involved in the synthesis of autoinducer 2 (AI-2) which is secreted by bacteria and is used to communicate both the cell density and the metabolic potential of the environment. The regulation of gene expression in response to changes in cell density is called quorum sensing. Catalyzes the transformation of S-ribosylhomocysteine (RHC) to homocysteine (HC) and 4,5-dihydroxy-2,3-pentadione (DPD). The polypeptide is S-ribosylhomocysteine lyase (Vibrio alginolyticus).